The following is a 248-amino-acid chain: uncharacterized protein (248 aa).

9-33 (IITGASSGIGEATAILLAEKGAKLV) serves as a coordination point for NADP(+). Ser141 contributes to the substrate binding site. The Proton acceptor role is filled by Tyr154.

Belongs to the short-chain dehydrogenases/reductases (SDR) family.

This is an uncharacterized protein from Listeria innocua serovar 6a (strain ATCC BAA-680 / CLIP 11262).